Here is a 118-residue protein sequence, read N- to C-terminus: Probable non-functional immunoglobulin lambda variable 2-33 (118 aa).

Residues 1–19 (MAWALLLLTLLTQGTGSWA) form the signal peptide. Residues 20-44 (QSALTQPPFVSGAPGQSVTISCTGT) are framework-1. Positions 34–118 (GQSVTISCTG…CSLYSSSYTF (85 aa)) constitute an Ig-like domain. The cysteines at positions 41 and 109 are disulfide-linked. Residues 45 to 53 (SSDVGDYDH) are complementarity-determining-1. Positions 54–70 (VFWYQKRLSTTSRLLIY) are framework-2. The interval 71–73 (NVN) is complementarity-determining-2. The framework-3 stretch occupies residues 74–109 (TRPSGISDLFSGSKSGNMASLTISGLKSEVEANYHC). The interval 110-118 (SLYSSSYTF) is complementarity-determining-3.

Immunoglobulins are composed of two identical heavy chains and two identical light chains; disulfide-linked.

Its subcellular location is the secreted. The protein localises to the cell membrane. Its function is as follows. Probable non-functional open reading frame (ORF) of V region of the variable domain of immunoglobulin light chains. Non-functional ORF generally cannot participate in the synthesis of a productive immunoglobulin chain due to altered V-(D)-J or switch recombination and/or splicing site (at mRNA level) and/or conserved amino acid change (protein level). Immunoglobulins, also known as antibodies, are membrane-bound or secreted glycoproteins produced by B lymphocytes. In the recognition phase of humoral immunity, the membrane-bound immunoglobulins serve as receptors which, upon binding of a specific antigen, trigger the clonal expansion and differentiation of B lymphocytes into immunoglobulins-secreting plasma cells. Secreted immunoglobulins mediate the effector phase of humoral immunity, which results in the elimination of bound antigens. The antigen binding site is formed by the variable domain of one heavy chain, together with that of its associated light chain. Thus, each immunoglobulin has two antigen binding sites with remarkable affinity for a particular antigen. The variable domains are assembled by a process called V-(D)-J rearrangement and can then be subjected to somatic hypermutations which, after exposure to antigen and selection, allow affinity maturation for a particular antigen. The polypeptide is Probable non-functional immunoglobulin lambda variable 2-33 (Homo sapiens (Human)).